Reading from the N-terminus, the 430-residue chain is C4-dicarboxylate transport protein (430 aa).

Helical transmembrane passes span 8-28 (SLYF…HFYP), 44-64 (LIKM…IAGM), 76-96 (IALL…LVIV), 144-164 (AFAS…GFAL), 184-204 (VIFG…FGAM), 222-242 (LIIC…GSIA), 289-309 (VVGL…SIYL), 326-346 (VIHQ…AAGV), and 352-372 (IVLA…LALI).

The protein belongs to the dicarboxylate/amino acid:cation symporter (DAACS) (TC 2.A.23) family.

The protein resides in the cell inner membrane. Functionally, responsible for the transport of dicarboxylates such as succinate, fumarate, and malate from the periplasm across the membrane. This Yersinia enterocolitica serotype O:8 / biotype 1B (strain NCTC 13174 / 8081) protein is C4-dicarboxylate transport protein.